The primary structure comprises 331 residues: Ribosomal RNA small subunit methyltransferase H (331 aa).

S-adenosyl-L-methionine is bound by residues 38–40, aspartate 56, phenylalanine 83, aspartate 100, and glutamine 107; that span reads GGY. The tract at residues 308–331 is disordered; the sequence is TDAPAGPVDPQVLGMPLIPKKGRR.

This sequence belongs to the methyltransferase superfamily. RsmH family.

The protein localises to the cytoplasm. It carries out the reaction cytidine(1402) in 16S rRNA + S-adenosyl-L-methionine = N(4)-methylcytidine(1402) in 16S rRNA + S-adenosyl-L-homocysteine + H(+). Functionally, specifically methylates the N4 position of cytidine in position 1402 (C1402) of 16S rRNA. This Cereibacter sphaeroides (strain ATCC 17025 / ATH 2.4.3) (Rhodobacter sphaeroides) protein is Ribosomal RNA small subunit methyltransferase H.